Here is a 139-residue protein sequence, read N- to C-terminus: Non-structural protein 1 (139 aa).

The short motif at aspartate 136–proline 139 is the DLNP; interaction with MAP1B element.

This sequence belongs to the pneumovirus non-structural protein 1 family. In terms of assembly, monomer. Homomultimer. Heteromultimer with NS2. Interacts with the matrix protein M. Interacts with host ELOC and CUL2; this interaction allows NS1 to form an active E3 ligase with ELOC and CUL2. Interacts with host IRF3; this interaction leads to the disrupted association of IRF3 with CREBBP and thus reduced binding of IRF3 to the IFN-beta promoter. Interacts with host MAVS; this interaction prevents MAVS binding to RIGI and inhibits signaling pathway leading to interferon production. Interacts with host MAP1B/microtubule-associated protein 1B. Interacts with host TRIM25 (via SPRY domain); this interaction suppresses RIGI ubiquitination and results in decreased interaction between RIGI and MAVS.

It localises to the host cytoplasm. The protein resides in the host mitochondrion. The protein localises to the host nucleus. Its function is as follows. Plays a major role in antagonizing the type I IFN-mediated antiviral response by degrading or inhibiting multiple cellular factors required for either IFN induction or response pathways. Acts cooperatively with NS2 to repress activation and nuclear translocation of host IFN-regulatory factor IRF3. Also disrupts the association of IRF3 with CREBBP. Interacts with host mitochondrial-associated membrane (MAM) MAVS and prevents the interaction with RIGI. Interacts with TRIM25 to suppress TRIM25-mediated RIGI ubiquitination and thereby RIGI-MAVS interaction. Together with NS2, participates in the proteasomal degradation of host STAT2, IRF3, IRF7, TBK1 and RIGI through a NS-degradasome involving CUL2 and Elongin-C. The degradasome requires an intact mitochondrial MAVS. Decreases the levels of host TRAF3 and IKBKE/IKK-epsilon. As functions other than disruptions of the type I IFN-mediated antiviral signaling pathways, induces host SOCS1 and SOCS3 expression. Suppresses premature apoptosis by an NF-kappa-B-dependent, interferon-independent mechanism and thus facilitates virus growth. Additionally, NS1 may serve some inhibitory role in viral transcription and RNA replication. Suppresses proliferation and activation of host CD103+ CD8+ cytotoxic T-lymphocytes and Th17 helper T-lymphocytes. The polypeptide is Non-structural protein 1 (1C) (Homo sapiens (Human)).